The primary structure comprises 1461 residues: Major viral transcription factor ICP4 homolog (1461 aa).

Disordered stretches follow at residues 25-60 (AAEEEGIASGPDGGSQGSRRRGSSGEDLLFGPGGLF), 75-518 (AAGA…SREG), 811-1002 (RPGP…PRPS), and 1395-1461 (AGGA…LLLR). Residues 75 to 90 (AAGATRPPRPPSAQQQ) show a composition bias toward low complexity. Residues 102 to 113 (VLDDEDEEEDEP) show a composition bias toward acidic residues. Low complexity-rich tracts occupy residues 167–197 (RSSPSAASPASSSSGSSGSSGSPGPSAAPRR) and 224–249 (PAAVAAAPARRGPASPASPAAGPVSA). Residues 250 to 260 (PGGGGAPSGGG) are compositionally biased toward gly residues. Residues 270–285 (REPLLDEPAAARRLDP) show a composition bias toward basic and acidic residues. Composition is skewed to low complexity over residues 292–308 (SPVSSNPNSSSSSTTTV) and 353–405 (GFSS…SSSS). A compositionally biased stretch (pro residues) spans 423–434 (GPPPSPPAPAAA). A compositionally biased stretch (low complexity) spans 435–453 (PRPSASSASATSSSAAASP). The segment covering 814-826 (PAEPAPGLPPLWP) has biased composition (pro residues). The span at 838–888 (PAAAGAPSGLPGSGPSSPASTKSGSSTKSSSGTKSGLSGSSGYASSPAAGP) shows a compositional bias: low complexity. The span at 894–903 (RRKKKRRAPG) shows a compositional bias: basic residues. Over residues 944-965 (LGLGPAPDPAPALVSSSSSSSS) the composition is skewed to low complexity.

The protein belongs to the herpesviridae ICP4 family. In terms of processing, a long stretch of serine residues may be a major site of phosphorylation.

It is found in the host nucleus. Its function is as follows. This IE protein is a multifunctional protein capable of migrating to the nucleus, binding to DNA, trans-activating other viral genes, and autoregulating its own synthesis. The chain is Major viral transcription factor ICP4 homolog (IE) from Sus scrofa (Pig).